Consider the following 90-residue polypeptide: Putative regulatory protein cce_4590 (90 aa).

The protein belongs to the RemA family.

This Crocosphaera subtropica (strain ATCC 51142 / BH68) (Cyanothece sp. (strain ATCC 51142)) protein is Putative regulatory protein cce_4590.